The sequence spans 127 residues: Riboflavin kinase (127 aa).

10-15 contributes to the CDP binding site; that stretch reads GLGEGR. The Mg(2+) site is built by threonine 39 and asparagine 41. FMN is bound by residues threonine 96 and glutamate 104. Position 109 to 112 (109 to 112) interacts with CDP; the sequence is IQLR.

The protein belongs to the archaeal riboflavin kinase family. The cofactor is Mg(2+).

It carries out the reaction riboflavin + CTP = CDP + FMN + H(+). It functions in the pathway cofactor biosynthesis; FMN biosynthesis; FMN from riboflavin (CTP route): step 1/1. In terms of biological role, catalyzes the CTP-dependent phosphorylation of riboflavin (vitamin B2) to form flavin mononucleotide (FMN). This Methanococcus maripaludis (strain C5 / ATCC BAA-1333) protein is Riboflavin kinase.